A 217-amino-acid chain; its full sequence is Adenylate kinase (217 aa).

Position 10 to 15 (10 to 15) interacts with ATP; it reads GGGKGT. The segment at 30–59 is NMP; the sequence is STGDMLRAAVASGSEVGKKAKAVMDAGQLV. AMP contacts are provided by residues threonine 31, arginine 36, 57–59, 85–88, and glutamine 92; these read QLV and GFPR. The segment at 126–164 is LID; that stretch reads GRYTCAKCGAGYHDKFQLPQVAGKCDSCGGTEFARRPDD. Residue arginine 127 participates in ATP binding. Zn(2+) is bound by residues cysteine 130, cysteine 133, cysteine 150, and cysteine 153. 2 residues coordinate AMP: arginine 161 and arginine 172. ATP is bound at residue methionine 200.

It belongs to the adenylate kinase family. As to quaternary structure, monomer.

It is found in the cytoplasm. It carries out the reaction AMP + ATP = 2 ADP. It participates in purine metabolism; AMP biosynthesis via salvage pathway; AMP from ADP: step 1/1. Its function is as follows. Catalyzes the reversible transfer of the terminal phosphate group between ATP and AMP. Plays an important role in cellular energy homeostasis and in adenine nucleotide metabolism. The chain is Adenylate kinase from Paramagnetospirillum magneticum (strain ATCC 700264 / AMB-1) (Magnetospirillum magneticum).